The following is a 731-amino-acid chain: DNA ligase (731 aa).

Residues 47–51 (DAEYD), 96–97 (SI), and glutamate 133 contribute to the NAD(+) site. Lysine 135 serves as the catalytic N6-AMP-lysine intermediate. The NAD(+) site is built by arginine 156, glutamate 192, lysine 313, and lysine 337. 4 residues coordinate Zn(2+): cysteine 462, cysteine 465, cysteine 480, and cysteine 486. The BRCT domain maps to 645 to 731 (AATLPLAGMT…RGTPPNAGGA (87 aa)).

Belongs to the NAD-dependent DNA ligase family. LigA subfamily. Mg(2+) is required as a cofactor. Requires Mn(2+) as cofactor.

The catalysed reaction is NAD(+) + (deoxyribonucleotide)n-3'-hydroxyl + 5'-phospho-(deoxyribonucleotide)m = (deoxyribonucleotide)n+m + AMP + beta-nicotinamide D-nucleotide.. DNA ligase that catalyzes the formation of phosphodiester linkages between 5'-phosphoryl and 3'-hydroxyl groups in double-stranded DNA using NAD as a coenzyme and as the energy source for the reaction. It is essential for DNA replication and repair of damaged DNA. This is DNA ligase from Acidovorax sp. (strain JS42).